A 76-amino-acid chain; its full sequence is High-potential iron-sulfur protein isozyme 2 (76 aa).

[4Fe-4S] cluster-binding residues include C38, C41, C54, and C70.

The protein belongs to the high-potential iron-sulfur protein (HiPIP) family. In terms of assembly, homodimer.

Specific class of high-redox-potential 4Fe-4S ferredoxins. Functions in anaerobic electron transport in most purple and in some other photosynthetic bacteria and in at least one genus (Paracoccus) of halophilic, denitrifying bacteria. The protein is High-potential iron-sulfur protein isozyme 2 (hip2) of Halorhodospira halophila (Ectothiorhodospira halophila).